A 128-amino-acid chain; its full sequence is Fluoride-specific ion channel FluC 1 (128 aa).

Helical transmembrane passes span 10–30 (VAFF…AFSF), 32–52 (GTVI…YFFL), 59–79 (AWLT…FSSF), and 93–113 (FGAL…AWAG). Residues G71 and T74 each coordinate Na(+).

Belongs to the fluoride channel Fluc/FEX (TC 1.A.43) family.

It localises to the cell membrane. It carries out the reaction fluoride(in) = fluoride(out). Na(+) is not transported, but it plays an essential structural role and its presence is essential for fluoride channel function. In terms of biological role, fluoride-specific ion channel. Important for reducing fluoride concentration in the cell, thus reducing its toxicity. The protein is Fluoride-specific ion channel FluC 1 of Lactobacillus delbrueckii subsp. bulgaricus (strain ATCC 11842 / DSM 20081 / BCRC 10696 / JCM 1002 / NBRC 13953 / NCIMB 11778 / NCTC 12712 / WDCM 00102 / Lb 14).